Here is a 308-residue protein sequence, read N- to C-terminus: MNLRKNVIRSVLRGARPLFASRRLGIAGRRVLLATLTAGARAPKGTRFQRVSIAGVPVQRVQPPHAATSGTLIYLHGGAYALGSARGYRGLAAQLAAAAGMTALVPDYTRAPHAHYPVALEEMAAVYTRLLDDGLDPKTTVIAGDSAGGGLTLALAMALRDRGIQAPAALGLICPWADLAVDIEATRPALRDPLILPSMCTEWAPRYVGSSDPRLPGISPVYGDMSGLPPIVMQTAGDDPICVDADKIETACAASKTSIEHRRFAGMWHDFHLQVSLLPEARDAIADLGARLRGHLHQSQGQPRGVVK.

Residues 1 to 40 (MNLRKNVIRSVLRGARPLFASRRLGIAGRRVLLATLTAGA) form the signal peptide. Residues 76 to 78 (HGG) carry the Involved in the stabilization of the negatively charged intermediate by the formation of the oxyanion hole motif. Catalysis depends on residues Ser146, Asp239, and His269.

The protein belongs to the 'GDXG' lipolytic enzyme family.

Its function is as follows. Required for maintaining the appropriate mycolic acid composition and permeability of the envelope on its exposure to acidic pH. The protein is Putative acetyl-hydrolase LipR (lipR) of Mycobacterium tuberculosis (strain ATCC 25618 / H37Rv).